The chain runs to 59 residues: MKNTIVQQQRFLQSIHKPTYLQRPGSFALVYPYYAVMAGLGLYSLYASGRVIFGKKDAF.

Over 1-24 (MKNTIVQQQRFLQSIHKPTYLQRP) the chain is Mitochondrial matrix. A helical membrane pass occupies residues 25–47 (GSFALVYPYYAVMAGLGLYSLYA). At 48-59 (SGRVIFGKKDAF) the chain is on the mitochondrial intermembrane side.

This sequence belongs to the cytochrome c oxidase subunit 7 family. As to quaternary structure, component of the cytochrome c oxidase (complex IV, CIV), a multisubunit enzyme composed of a catalytic core of 3 subunits and several supernumerary subunits. The complex exists as a monomer or a dimer and forms supercomplexes (SCs) in the inner mitochondrial membrane with ubiquinol-cytochrome c oxidoreductase (cytochrome b-c1 complex, complex III, CIII).

It is found in the mitochondrion inner membrane. The protein operates within energy metabolism; oxidative phosphorylation. Component of the cytochrome c oxidase, the last enzyme in the mitochondrial electron transport chain which drives oxidative phosphorylation. The respiratory chain contains 3 multisubunit complexes succinate dehydrogenase (complex II, CII), ubiquinol-cytochrome c oxidoreductase (cytochrome b-c1 complex, complex III, CIII) and cytochrome c oxidase (complex IV, CIV), that cooperate to transfer electrons derived from NADH and succinate to molecular oxygen, creating an electrochemical gradient over the inner membrane that drives transmembrane transport and the ATP synthase. Cytochrome c oxidase is the component of the respiratory chain that catalyzes the reduction of oxygen to water. Electrons originating from reduced cytochrome c in the intermembrane space (IMS) are transferred via the dinuclear copper A center (CU(A)) of subunit 2 and heme A of subunit 1 to the active site in subunit 1, a binuclear center (BNC) formed by heme A3 and copper B (CU(B)). The BNC reduces molecular oxygen to 2 water molecules using 4 electrons from cytochrome c in the IMS and 4 protons from the mitochondrial matrix. In Schizosaccharomyces pombe (strain 972 / ATCC 24843) (Fission yeast), this protein is Cytochrome c oxidase subunit 7 (cox7).